Consider the following 130-residue polypeptide: Small ribosomal subunit protein uS11 (130 aa).

It belongs to the universal ribosomal protein uS11 family. In terms of assembly, part of the 30S ribosomal subunit. Interacts with proteins S7 and S18. Binds to IF-3.

Located on the platform of the 30S subunit, it bridges several disparate RNA helices of the 16S rRNA. Forms part of the Shine-Dalgarno cleft in the 70S ribosome. In Borreliella afzelii (strain PKo) (Borrelia afzelii), this protein is Small ribosomal subunit protein uS11.